The primary structure comprises 258 residues: Peptidase inhibitor 15 (258 aa).

Positions 1-21 (MTIIAAISCVFLFSILCETSA) are cleaved as a signal peptide. A propeptide spanning residues 22–60 (LVLPNSTDLLLSNNNFTDIETALAAHLDSAKIPKARRKR) is cleaved from the precursor. Residues asparagine 26, asparagine 36, and asparagine 124 are each glycosylated (N-linked (GlcNAc...) asparagine). The region spanning 71–211 (LDYHNQVRGK…RRAVYLVCNY (141 aa)) is the SCP domain.

It belongs to the CRISP family.

Its subcellular location is the secreted. In terms of biological role, serine protease inhibitor which displays weak inhibitory activity against trypsin. May play a role in facial patterning during embryonic development. The polypeptide is Peptidase inhibitor 15 (PI15) (Gallus gallus (Chicken)).